The primary structure comprises 256 residues: Dihydroorotate dehydrogenase B (NAD(+)), electron transfer subunit (256 aa).

An FAD-binding FR-type domain is found at 2–100 (IRLETMKVVA…MGPQGNGFDL (99 aa)). FAD-binding positions include 51–54 (RPIS), 68–70 (IYR), and 75–76 (GT). 4 residues coordinate [2Fe-2S] cluster: C220, C225, C228, and C243.

Belongs to the PyrK family. In terms of assembly, heterotetramer of 2 PyrK and 2 PyrD type B subunits. [2Fe-2S] cluster serves as cofactor. It depends on FAD as a cofactor.

The protein operates within pyrimidine metabolism; UMP biosynthesis via de novo pathway; orotate from (S)-dihydroorotate (NAD(+) route): step 1/1. In terms of biological role, responsible for channeling the electrons from the oxidation of dihydroorotate from the FMN redox center in the PyrD type B subunit to the ultimate electron acceptor NAD(+). The sequence is that of Dihydroorotate dehydrogenase B (NAD(+)), electron transfer subunit from Streptococcus pneumoniae (strain ATCC BAA-255 / R6).